Reading from the N-terminus, the 288-residue chain is Bifunctional protein FolD 2 (288 aa).

NADP(+)-binding positions include 166–168 (GRS) and S191.

This sequence belongs to the tetrahydrofolate dehydrogenase/cyclohydrolase family. In terms of assembly, homodimer.

It catalyses the reaction (6R)-5,10-methylene-5,6,7,8-tetrahydrofolate + NADP(+) = (6R)-5,10-methenyltetrahydrofolate + NADPH. The catalysed reaction is (6R)-5,10-methenyltetrahydrofolate + H2O = (6R)-10-formyltetrahydrofolate + H(+). It functions in the pathway one-carbon metabolism; tetrahydrofolate interconversion. Its function is as follows. Catalyzes the oxidation of 5,10-methylenetetrahydrofolate to 5,10-methenyltetrahydrofolate and then the hydrolysis of 5,10-methenyltetrahydrofolate to 10-formyltetrahydrofolate. The sequence is that of Bifunctional protein FolD 2 from Myxococcus xanthus (strain DK1622).